The sequence spans 836 residues: Protein IWS1 homolog A (836 aa).

The interval 1–542 (MEADNYSPEH…DMKSGKMGDY (542 aa)) is disordered. Basic and acidic residues-rich tracts occupy residues 20–36 (QDER…EQRS), 43–122 (HQSE…DRSP), 133–148 (EPVR…DVPR), 157–186 (DERH…DKAP), 206–218 (DSKD…HAAS), 288–309 (VPVK…KASD), 370–386 (RSSE…KKLQ), and 458–469 (ERKSKTETKSAD). Residues 476 to 485 (SDSENEEENL) show a composition bias toward acidic residues. Over residues 533–542 (DMKSGKMGDY) the composition is skewed to basic and acidic residues. A TFIIS N-terminal domain is found at 631–709 (SAIKEWLTPL…NEWSRPIFGL (79 aa)). The disordered stretch occupies residues 714–746 (KGMTREEREQRDIEQMPQRRRMSSSGGQTPRRD). A compositionally biased stretch (basic and acidic residues) spans 716–727 (MTREEREQRDIE).

This sequence belongs to the IWS1 family.

It is found in the nucleus. In terms of biological role, transcription factor which plays a key role in defining the composition of the RNA polymerase II (RNAPII) elongation complex and in modulating the production of mature mRNA transcripts. The protein is Protein IWS1 homolog A (iws1-a) of Xenopus laevis (African clawed frog).